The sequence spans 582 residues: V-type ATP synthase alpha chain (582 aa).

231–238 (GPFGSGKT) lines the ATP pocket.

This sequence belongs to the ATPase alpha/beta chains family.

It carries out the reaction ATP + H2O + 4 H(+)(in) = ADP + phosphate + 5 H(+)(out). Functionally, produces ATP from ADP in the presence of a proton gradient across the membrane. The V-type alpha chain is a catalytic subunit. This is V-type ATP synthase alpha chain from Deinococcus deserti (strain DSM 17065 / CIP 109153 / LMG 22923 / VCD115).